Consider the following 120-residue polypeptide: NADH-quinone oxidoreductase subunit A (120 aa).

3 consecutive transmembrane segments (helical) span residues 6–26, 63–83, and 89–109; these read YGIIAVFLVGGAATAVAALAT, FLYALVFLLFDVETVFLYPWA, and LGLFAFAEMIVFIGILVLGLW.

This sequence belongs to the complex I subunit 3 family. In terms of assembly, NDH-1 is composed of 14 different subunits. Subunits NuoA, H, J, K, L, M, N constitute the membrane sector of the complex.

Its subcellular location is the cell membrane. It carries out the reaction a quinone + NADH + 5 H(+)(in) = a quinol + NAD(+) + 4 H(+)(out). In terms of biological role, NDH-1 shuttles electrons from NADH, via FMN and iron-sulfur (Fe-S) centers, to quinones in the respiratory chain. The immediate electron acceptor for the enzyme in this species is believed to be a menaquinone. Couples the redox reaction to proton translocation (for every two electrons transferred, four hydrogen ions are translocated across the cytoplasmic membrane), and thus conserves the redox energy in a proton gradient. The protein is NADH-quinone oxidoreductase subunit A of Moorella thermoacetica (strain ATCC 39073 / JCM 9320).